Here is a 347-residue protein sequence, read N- to C-terminus: D-alanine--D-alanine ligase (347 aa).

The 199-residue stretch at 134–332 (KLYAKDLGVK…LAQSLPKTPK (199 aa)) folds into the ATP-grasp domain. 161-216 (LIKFNFPFIVKPSNAGSSLGVNVVKEEKELVYALDSAFEYSKEVLIEPFIQGVKEY) is an ATP binding site. 3 residues coordinate Mg(2+): aspartate 288, glutamate 300, and asparagine 302.

This sequence belongs to the D-alanine--D-alanine ligase family. It depends on Mg(2+) as a cofactor. Mn(2+) is required as a cofactor.

Its subcellular location is the cytoplasm. It catalyses the reaction 2 D-alanine + ATP = D-alanyl-D-alanine + ADP + phosphate + H(+). It functions in the pathway cell wall biogenesis; peptidoglycan biosynthesis. Functionally, cell wall formation. The polypeptide is D-alanine--D-alanine ligase (Helicobacter pylori (strain P12)).